A 1338-amino-acid chain; its full sequence is Apoptotic chromatin condensation inducer in the nucleus (1338 aa).

A disordered region spans residues 1–57; sequence MWGRKRPNSSGETRGILSGNRGVDYGSGRGQSGPFEGRWRKLPKMPEAVGTDPSTSR. Residues 72–106 form the SAP domain; it reads LQALRVTDLKAALEQRGLAKSGQKSALVKRLKGAL. Phosphoserine is present on residues Ser132, Ser166, Ser169, Ser208, Ser210, and Ser216. A disordered region spans residues 155 to 866; that stretch reads EAREAAELEE…ATQKKPSISI (712 aa). Residues 161-171 are compositionally biased toward acidic residues; sequence ELEEASAESED. Residues 219-228 show a composition bias toward basic and acidic residues; the sequence is EKPRKGERRS. At Ser242 the chain carries Phosphoserine. Thr253 bears the Phosphothreonine mark. A Glycyl lysine isopeptide (Lys-Gly) (interchain with G-Cter in SUMO1) cross-link involves residue Lys267. The segment covering 269–290 has biased composition (acidic residues); it reads EEEEEEEEEEEDDDDEEEEEVD. Residue Ser295 is modified to Phosphoserine. Residues 313–353 are compositionally biased toward basic and acidic residues; that stretch reads ERTRAKPEKVVDEKPLNIRSQEKGELEKGGRVTRSQEEARR. Lys318 participates in a covalent cross-link: Glycyl lysine isopeptide (Lys-Gly) (interchain with G-Cter in SUMO2). A phosphoserine mark is found at Ser332 and Ser369. Lys378 is covalently cross-linked (Glycyl lysine isopeptide (Lys-Gly) (interchain with G-Cter in SUMO2)). 4 positions are modified to phosphoserine: Ser387, Ser389, Ser391, and Ser413. Phosphothreonine occurs at positions 417 and 423. The span at 425 to 434 shows a compositional bias: polar residues; the sequence is EASSPPTHIQ. A phosphoserine mark is found at Ser454, Ser477, Ser479, Ser491, and Ser497. Positions 506 to 518 are enriched in polar residues; sequence QKSSLPECSTQKG. The span at 542–559 shows a compositional bias: basic and acidic residues; sequence ITEEPMKKQSLEQKEGRR. Phosphoserine is present on Ser561. Low complexity-rich tracts occupy residues 573 to 603 and 646 to 662; these read SADSSSSRSSSPSSSSSPSRSPSPDSVASRP and RSASSSSRKSLSPGVSR. Position 654 is an N6,N6,N6-trimethyllysine; by EHMT2; alternate (Lys654). Lys654 carries the N6,N6-dimethyllysine; by EHMT2; alternate modification. Phosphoserine occurs at positions 655, 657, 710, and 729. Lys732 participates in a covalent cross-link: Glycyl lysine isopeptide (Lys-Gly) (interchain with G-Cter in SUMO2). Over residues 744–754 the composition is skewed to polar residues; that stretch reads TQPQTSETQIS. Basic and acidic residues-rich tracts occupy residues 757–767 and 798–815; these read LESERTHHTVE and NDERPEGGAEEEEKKESS. Phosphoserine is present on residues Ser825 and Ser838. Polar residues predominate over residues 855 to 866; sequence TAATQKKPSISI. Lys861 is modified (N6-acetyllysine; alternate). Residue Lys861 forms a Glycyl lysine isopeptide (Lys-Gly) (interchain with G-Cter in SUMO2); alternate linkage. Lys879 participates in a covalent cross-link: Glycyl lysine isopeptide (Lys-Gly) (interchain with G-Cter in SUMO2). Basic and acidic residues predominate over residues 892 to 915; it reads ADDSRISEDETERNGDDGTHDKGL. The segment at 892–950 is disordered; it reads ADDSRISEDETERNGDDGTHDKGLKICRTVTQVVPAEGQENGQREEEEEKEPEAELPAP. Phosphoserine occurs at positions 895 and 898. Positions 936 to 945 are enriched in acidic residues; the sequence is EEEEEKEPEA. A Glycyl lysine isopeptide (Lys-Gly) (interchain with G-Cter in SUMO2) cross-link involves residue Lys969. Position 975 is a phosphothreonine (Thr975). 3 positions are modified to phosphoserine: Ser986, Ser989, and Ser1003. Glycyl lysine isopeptide (Lys-Gly) (interchain with G-Cter in SUMO2) cross-links involve residues Lys1046 and Lys1106. Disordered stretches follow at residues 1104 to 1214 and 1226 to 1338; these read ETKA…DDLF and LPLT…GGRR. Positions 1115-1129 are enriched in pro residues; sequence PLHPPPPPPVQPPPH. The segment covering 1130–1174 has biased composition (basic and acidic residues); that stretch reads PRAEQREQERAVREQWAEREREMERRERTRSEREWDRDKVREGPR. Residues 1175 to 1192 are compositionally biased toward basic residues; the sequence is SRSRSRDRRRKERAKSKE. Ser1179 is subject to Phosphoserine; by SRPK2 and PKB/AKT1. Basic and acidic residues-rich tracts occupy residues 1193–1214 and 1236–1317; these read KKSEKKEKAQEEPPAKLLDDLF and KEAE…DRRD. The interval 1209-1236 is sufficient for interaction with RNPS1 and SAP18 and formation of the ASAP complex; the sequence is LLDDLFRKTKAAPCIYWLPLTESQIVQK.

As to quaternary structure, found in a mRNA splicing-dependent exon junction complex (EJC). Component of the heterotrimeric ASAP (apoptosis- and splicing-associated protein) complexes consisting of RNPS1, SAP18 and different isoforms of ACIN1; the association of SAP18 seems to require a preformed RNPS1:ACIN1 complex. Interacts with API5. Interacts with SRPK2 in a phosphorylation-dependent manner. In terms of processing, undergoes proteolytic cleavage; the processed form is active, contrary to the uncleaved form. Phosphorylation on Ser-1179 by SRPK2 up-regulates its stimulatory effect on cyclin A1.

The protein resides in the nucleus. It is found in the nucleus speckle. The protein localises to the nucleoplasm. Auxiliary component of the splicing-dependent multiprotein exon junction complex (EJC) deposited at splice junction on mRNAs. The EJC is a dynamic structure consisting of core proteins and several peripheral nuclear and cytoplasmic associated factors that join the complex only transiently either during EJC assembly or during subsequent mRNA metabolism. Component of the ASAP complexes which bind RNA in a sequence-independent manner and are proposed to be recruited to the EJC prior to or during the splicing process and to regulate specific excision of introns in specific transcription subsets; ACIN1 confers RNA-binding to the complex. The ASAP complex can inhibit RNA processing during in vitro splicing reactions. The ASAP complex promotes apoptosis and is disassembled after induction of apoptosis. Involved in the splicing modulation of BCL2L1/Bcl-X (and probably other apoptotic genes); specifically inhibits formation of proapoptotic isoforms such as Bcl-X(S); the activity is different from the established EJC assembly and function. Induces apoptotic chromatin condensation after activation by CASP3. Regulates cyclin A1, but not cyclin A2, expression in leukemia cells. This is Apoptotic chromatin condensation inducer in the nucleus (Acin1) from Mus musculus (Mouse).